Here is a 108-residue protein sequence, read N- to C-terminus: UPF0102 protein Sbal_4100 (108 aa).

Belongs to the UPF0102 family.

This is UPF0102 protein Sbal_4100 from Shewanella baltica (strain OS155 / ATCC BAA-1091).